The primary structure comprises 513 residues: Maturase K (513 aa).

It belongs to the intron maturase 2 family. MatK subfamily.

The protein localises to the plastid. The protein resides in the chloroplast. Its function is as follows. Usually encoded in the trnK tRNA gene intron. Probably assists in splicing its own and other chloroplast group II introns. The polypeptide is Maturase K (Keckiella cordifolia (Heart-leafed penstemon)).